The sequence spans 617 residues: Neurosecretory protein VGF (617 aa).

A signal peptide spans 1–23 (MKTFTLPASVLFCFLLLIQGLGA). Disordered regions lie at residues 29–75 (PDVF…GELF), 93–204 (RPAS…ESPG), and 239–262 (SESAPLPETHQFGEGVSSPKTHLG). Residues 48–64 (AVSRPKDDGVPEVRAAR) show a composition bias toward basic and acidic residues. A compositionally biased stretch (acidic residues) spans 149-160 (DPEEDDRSEELE). The segment covering 182–197 (ETAAAETETRTHTLTR) has biased composition (low complexity). Glutamine 313 bears the Pyrrolidone carboxylic acid mark. Residues 345–364 (RQRDLGGRELQETQQERENE) are compositionally biased toward basic and acidic residues. The tract at residues 345-599 (RQRDLGGREL…EEADAEERRL (255 aa)) is disordered. Over residues 378 to 397 (EDDVGEEDEEAAEAEAEAEE) the composition is skewed to acidic residues. The segment covering 418–436 (AEDKRSQEEAPGHRRKDAE) has biased composition (basic and acidic residues). The residue at position 423 (serine 423) is a Phosphoserine. Residues 437-452 (GAEEGGEEDDDDEEMD) show a composition bias toward acidic residues. The span at 491-501 (PPEPVPPPRAA) shows a compositional bias: pro residues. A compositionally biased stretch (basic and acidic residues) spans 577–599 (HHPDLEAQARRAQEEADAEERRL).

Interacts with HSPA8 on cell membrane. Interacts with C3AR1. Interacts with C1QBP.

It is found in the secreted. The protein resides in the cytoplasmic vesicle. The protein localises to the secretory vesicle. Its function is as follows. Secreted polyprotein that is packaged and proteolytically processed by prohormone convertases PCSK1 and PCSK2 in a cell-type-specific manner. VGF and peptides derived from its processing play many roles in neurogenesis and neuroplasticity associated with learning, memory, depression and chronic pain. Functionally, plays a role in the control of body fluid homeostasis by regulating vasopressin release. Suppresses presynaptic glutamatergic neurons connected to vasopressin neurons. In terms of biological role, plays a role in the control of body fluid homeostasis by regulating vasopressin release. Activates GABAergic interneurons which are inhibitory neurons of the nervous system and thereby suppresses presynaptic glutamatergic neurons. Also stimulates feeding behavior in an orexin-dependent manner in the hypothalamus. Functions as a positive regulator for the activation of orexin neurons resulting in elevated gastric acid secretion and gastric emptying. Secreted multifunctional peptide that interacts with different receptors and thereby plays multiple physiological roles including modulation of energy expenditure, pain, response to stress, gastric regulation as well as lipolysis. Activates the G-protein-coupled receptor C3AR1 via a folding-upon-binding mechanism leading to enhanced lipolysis in adipocytes. Interacts with gC1qR receptor in macrophages and microglia causing increased levels of intracellular calcium and hypersensitivity. Its function is as follows. Plays a role in the regulation of memory formation and depression-related behaviors potentially by influencing synaptic plasticity and neurogenesis. Induces acute and transient activation of the NTRK2/TRKB receptor and subsequent CREB phosphorylation. Also induces insulin secretion in insulinoma cells by increasing intracellular calcium mobilization. The protein is Neurosecretory protein VGF of Mus musculus (Mouse).